The following is a 441-amino-acid chain: Histidinol dehydrogenase (441 aa).

Residues Thr-240, Gln-262, and His-265 each coordinate substrate. Zn(2+) is bound by residues Gln-262 and His-265. Catalysis depends on proton acceptor residues Glu-332 and His-333. Positions 333, 366, 420, and 425 each coordinate substrate. Zn(2+) is bound at residue Asp-366. His-425 provides a ligand contact to Zn(2+).

It belongs to the histidinol dehydrogenase family. Zn(2+) serves as cofactor.

The enzyme catalyses L-histidinol + 2 NAD(+) + H2O = L-histidine + 2 NADH + 3 H(+). It functions in the pathway amino-acid biosynthesis; L-histidine biosynthesis; L-histidine from 5-phospho-alpha-D-ribose 1-diphosphate: step 9/9. Functionally, catalyzes the sequential NAD-dependent oxidations of L-histidinol to L-histidinaldehyde and then to L-histidine. This Streptomyces avermitilis (strain ATCC 31267 / DSM 46492 / JCM 5070 / NBRC 14893 / NCIMB 12804 / NRRL 8165 / MA-4680) protein is Histidinol dehydrogenase.